We begin with the raw amino-acid sequence, 790 residues long: AMP deaminase (790 aa).

The segment covering 1–14 (MSTPLRGSSPQVSF) has biased composition (polar residues). The segment at 1–26 (MSTPLRGSSPQVSFYESELDQEGGSD) is disordered. Zn(2+)-binding residues include His-221 and His-223. Substrate-binding positions include His-223 and 292-297 (KFNLKY). His-488 serves as a coordination point for Zn(2+). Glu-491 is a substrate binding site. The active-site Proton acceptor is the His-510. Position 565 (Asp-565) interacts with Zn(2+). Position 566–569 (566–569 (DPLQ)) interacts with substrate. 2 disordered regions span residues 698–726 (NKLR…SSPG) and 739–790 (PPPL…KSDK). Low complexity-rich tracts occupy residues 706-726 (GSTP…SSPG) and 750-781 (NNNN…TTTN).

It belongs to the metallo-dependent hydrolases superfamily. Adenosine and AMP deaminases family. In terms of assembly, homodimer. The cofactor is Zn(2+).

It localises to the cytoplasm. The catalysed reaction is AMP + H2O + H(+) = IMP + NH4(+). Its pathway is purine metabolism; IMP biosynthesis via salvage pathway; IMP from AMP: step 1/1. With respect to regulation, activated by ATP, inhibited by GTP, EDTA and inorganic phosphate. In terms of biological role, catalyzes the conversion of adenosine monophosphate (AMP) to inosine monophosphate (IMP) and ammonia (NH4(+)). Participates in the regulation of the adenylated nucleotide pool and the interconversion to guanylated nucleotides during early morphodifferentiation. The chain is AMP deaminase (amdA) from Dictyostelium discoideum (Social amoeba).